The sequence spans 492 residues: GlcNAc-binding protein A (492 aa).

Residues 1–23 (MNKSSTKTLIALSMMAVSSGVSA) form the signal peptide. The region spanning 24–204 (HGYVSETNDG…AFYNVIDVKF (181 aa)) is the Chitin-binding type-4 domain. One can recognise a Chitin-binding type-3 domain in the interval 443–484 (AGTKVLAEDGNVYQCKEFPYSGYCVQWTETATNFAPGVGSDW).

Belongs to the GbpA family.

The protein resides in the secreted. Functionally, probably interacts with GlcNAc residues. May promote attachment to both epithelial cell surfaces and chitin. The chain is GlcNAc-binding protein A from Aliivibrio fischeri (strain ATCC 700601 / ES114) (Vibrio fischeri).